We begin with the raw amino-acid sequence, 566 residues long: Arginine--tRNA ligase (566 aa).

A 'HIGH' region motif is present at residues 121–131 (ANPNGPFHIGH).

The protein belongs to the class-I aminoacyl-tRNA synthetase family.

Its subcellular location is the cytoplasm. The catalysed reaction is tRNA(Arg) + L-arginine + ATP = L-arginyl-tRNA(Arg) + AMP + diphosphate. The sequence is that of Arginine--tRNA ligase from Methanococcus maripaludis (strain C7 / ATCC BAA-1331).